We begin with the raw amino-acid sequence, 229 residues long: ADP-ribosylation factor-like protein 6-interacting protein 4 (229 aa).

The span at 1 to 20 (MAHVGSRKRSRSRSRSRSGR) shows a compositional bias: basic residues. The tract at residues 1 to 152 (MAHVGSRKRS…EDNDGPVLTD (152 aa)) is disordered. The segment covering 21 to 35 (RGSEKRSKRSSKDAS) has biased composition (basic and acidic residues). Low complexity predominate over residues 66-87 (SRSSSTSSSSSSSSSASSSSSS). Residues 90 to 117 (RKKRAKHKEKKRKKKKKKRKKKLKKRVK) are compositionally biased toward basic residues. Serine 140 and serine 174 each carry phosphoserine. Lysine 191 is covalently cross-linked (Glycyl lysine isopeptide (Lys-Gly) (interchain with G-Cter in SUMO2)).

This sequence belongs to the ARL6IP4 family. In terms of assembly, interacts with ZCCHC17. Interacts with SRSF2. Interacts with ARL6. In terms of tissue distribution, widely expressed. Expressed at high level in testis and thymus.

The protein localises to the nucleus. It is found in the nucleolus. It localises to the nucleus speckle. Its function is as follows. Involved in modulating alternative pre-mRNA splicing with either 5' distal site activation or preferential use of 3' proximal site. This Mus musculus (Mouse) protein is ADP-ribosylation factor-like protein 6-interacting protein 4 (Arl6ip4).